Here is a 493-residue protein sequence, read N- to C-terminus: Ketol-acid reductoisomerase (NADP(+)) (493 aa).

Residues 15–208 form the KARI N-terminal Rossmann domain; it reads AQLGKCRFMQ…GGDRAGVLES (194 aa). NADP(+)-binding positions include 45 to 48, arginine 68, arginine 76, serine 78, and 108 to 110; these read CGAQ and DKQ. Residue histidine 132 is part of the active site. Residue glycine 158 participates in NADP(+) binding. KARI C-terminal knotted domains follow at residues 209–344 and 345–486; these read SFVA…NAPA and FAGK…MKDM. Mg(2+) is bound by residues aspartate 217, glutamate 221, glutamate 389, and glutamate 393. A substrate-binding site is contributed by serine 414.

This sequence belongs to the ketol-acid reductoisomerase family. It depends on Mg(2+) as a cofactor.

The catalysed reaction is (2R)-2,3-dihydroxy-3-methylbutanoate + NADP(+) = (2S)-2-acetolactate + NADPH + H(+). It catalyses the reaction (2R,3R)-2,3-dihydroxy-3-methylpentanoate + NADP(+) = (S)-2-ethyl-2-hydroxy-3-oxobutanoate + NADPH + H(+). Its pathway is amino-acid biosynthesis; L-isoleucine biosynthesis; L-isoleucine from 2-oxobutanoate: step 2/4. It participates in amino-acid biosynthesis; L-valine biosynthesis; L-valine from pyruvate: step 2/4. In terms of biological role, involved in the biosynthesis of branched-chain amino acids (BCAA). Catalyzes an alkyl-migration followed by a ketol-acid reduction of (S)-2-acetolactate (S2AL) to yield (R)-2,3-dihydroxy-isovalerate. In the isomerase reaction, S2AL is rearranged via a Mg-dependent methyl migration to produce 3-hydroxy-3-methyl-2-ketobutyrate (HMKB). In the reductase reaction, this 2-ketoacid undergoes a metal-dependent reduction by NADPH to yield (R)-2,3-dihydroxy-isovalerate. The protein is Ketol-acid reductoisomerase (NADP(+)) of Aeromonas hydrophila subsp. hydrophila (strain ATCC 7966 / DSM 30187 / BCRC 13018 / CCUG 14551 / JCM 1027 / KCTC 2358 / NCIMB 9240 / NCTC 8049).